A 404-amino-acid polypeptide reads, in one-letter code: Intracellular hyaluronan-binding protein 4.L (404 aa).

3 disordered regions span residues 1–21 (MRLD…MQDN), 51–288 (LTRR…QEMS), and 359–379 (LTRP…REEA). Positions 8–19 (ETPSSPVNTEMQ) are enriched in polar residues. Basic and acidic residues-rich tracts occupy residues 71–81 (GKKESQKDRKA), 145–159 (KVDR…REVR), and 165–184 (RSNE…DKQM). Positions 188–200 (GGRGGMRGRGRGG) are enriched in gly residues. Basic and acidic residues-rich tracts occupy residues 205-233 (TEND…DKRG) and 270-281 (EEHAKVPEEKNE).

Belongs to the SERBP1-HABP4 family. Associates with ribosomes; promoting ribosome stabilization. Interacts with eef2/eEF2; promoting ribosome stabilization.

Its subcellular location is the nucleus. The protein resides in the cytoplasm. It is found in the stress granule. It localises to the nucleolus. The protein localises to the nucleus speckle. Its subcellular location is the cajal body. Functionally, ribosome-binding protein that promotes ribosome hibernation, a process during which ribosomes are stabilized in an inactive state and preserved from proteasomal degradation. Acts via its association with eef2/eEF2 factor at the A-site of the ribosome, promoting ribosome stabilization in an inactive state compatible with storage. Plays a key role in ribosome hibernation in the mature egg by promoting ribosome stabilization. Ribosomes, which are produced in large quantities during oogenesis, are stored and translationally repressed in the egg and early embryo. The protein is Intracellular hyaluronan-binding protein 4.L of Xenopus laevis (African clawed frog).